The chain runs to 577 residues: Arginine--tRNA ligase (577 aa).

The 'HIGH' region motif lies at 124 to 132 (VAKEMHVGH).

The protein belongs to the class-I aminoacyl-tRNA synthetase family. In terms of assembly, monomer.

It localises to the cytoplasm. The catalysed reaction is tRNA(Arg) + L-arginine + ATP = L-arginyl-tRNA(Arg) + AMP + diphosphate. The protein is Arginine--tRNA ligase of Salmonella typhi.